The following is a 234-amino-acid chain: CD-NTase-associated protein 13 (234 aa).

A helical transmembrane segment spans residues 20 to 42 (TIMKNVIANVSTAITLALMILWI).

It in the C-terminal section; belongs to the bacterial STING family.

It is found in the cell inner membrane. Functionally, effector protein of a CBASS antivirus system. CBASS (cyclic oligonucleotide-based antiphage signaling system) provides immunity against bacteriophage. The CD-NTase protein synthesizes cyclic nucleotides in response to infection; these serve as specific second messenger signals. The signals activate a diverse range of effectors, leading to bacterial cell death and thus abortive phage infection. A type I-D CBASS(GG) system. Its function is as follows. Binds c-di-GMP (synthesized by the cognate CdnE encoded upstream in the same operon) and about 10-fold less well 3'3'-cGAMP, but not c-di-AMP, 2'3'-cGAMP or cUMP-AMP (tested with a protein without the transmembrane region). The effector protein for this CBASS system, its activity is stimulated by c-di-GMP and leads to cell death. The sequence is that of CD-NTase-associated protein 13 from Roseivirga ehrenbergii (strain DSM 102268 / JCM 13514 / KCTC 12282 / NCIMB 14502 / KMM 6017).